The sequence spans 575 residues: Flagellin B (575 aa).

It belongs to the bacterial flagellin family. Heteromer of flaA and flaB.

The protein localises to the secreted. It is found in the bacterial flagellum. Flagellin is the subunit protein which polymerizes to form the filaments of bacterial flagella. The polypeptide is Flagellin B (flaB) (Campylobacter jejuni).